Consider the following 118-residue polypeptide: Probable small nuclear ribonucleoprotein Sm D2 (118 aa).

In terms of domain architecture, Sm spans 29-115 (LSILTNSVKN…VILVVKNPLA (87 aa)).

Belongs to the snRNP core protein family.

It is found in the nucleus. The protein localises to the cytoplasm. Its subcellular location is the cytosol. Its function is as follows. Plays a role in pre-mRNA splicing as a core component of the spliceosomal U1, U2, U4 and U5 small nuclear ribonucleoproteins (snRNPs), the building blocks of the spliceosome. This Caenorhabditis elegans protein is Probable small nuclear ribonucleoprotein Sm D2 (snr-4).